Consider the following 275-residue polypeptide: MGIRFYKANTPGTRNRSVSDFSEITHSKPEKSLTFNVQRAKGRNNRGVITSRHRGGGHKRLYRLIDFKRNKIGIAAKVATIEYDPNRNARIALLHYQDGEKRYILHPRGLNVGSSIISSLNAPVLTGNALPLKNIPLGGEVHNVELQPGAGGQLARAAGAVAQIVAKEGNLVTLRLPSGEVRLVSNECWATVGQVGNTDAINMVVGKAGRKRWLGKRPHVRGVVMNPCDHPHGGGEGRSPIGRPRPVSPWGKPALGQRTRKGHKYSDQMILRRRK.

The disordered stretch occupies residues 225 to 275 (MNPCDHPHGGGEGRSPIGRPRPVSPWGKPALGQRTRKGHKYSDQMILRRRK).

The protein belongs to the universal ribosomal protein uL2 family. In terms of assembly, part of the 50S ribosomal subunit.

It localises to the plastid. Its subcellular location is the chloroplast. This Oltmannsiellopsis viridis (Marine flagellate) protein is Large ribosomal subunit protein uL2c (rpl2).